Here is a 230-residue protein sequence, read N- to C-terminus: Urease accessory protein UreF (230 aa).

The protein belongs to the UreF family. UreD, UreF and UreG form a complex that acts as a GTP-hydrolysis-dependent molecular chaperone, activating the urease apoprotein by helping to assemble the nickel containing metallocenter of UreC. The UreE protein probably delivers the nickel.

The protein resides in the cytoplasm. Functionally, required for maturation of urease via the functional incorporation of the urease nickel metallocenter. This Cupriavidus taiwanensis (strain DSM 17343 / BCRC 17206 / CCUG 44338 / CIP 107171 / LMG 19424 / R1) (Ralstonia taiwanensis (strain LMG 19424)) protein is Urease accessory protein UreF.